We begin with the raw amino-acid sequence, 383 residues long: Protein dyf-4 (383 aa).

The N-terminal stretch at 1-16 (MKTIWLLLATCIHVFA) is a signal peptide. The N-linked (GlcNAc...) asparagine glycan is linked to asparagine 64.

In terms of assembly, interacts with daf-6. As to expression, expressed in sheath and socket glial cells in both the amphid and phasmid ciliated sensory neurons (at protein level).

It is found in the secreted. Required for the localization of daf-6 to the socket glial channel and the sheath lumen. In association with daf-6, plays a role in dendrite extension and ciliogenesis to ensure the formation of glial channels in amphid and phasmid ciliated sensory neurons. This Caenorhabditis elegans protein is Protein dyf-4.